A 77-amino-acid polypeptide reads, in one-letter code: Secapin (77 aa).

The signal sequence occupies residues 1 to 32 (MKNYSKNATYLITVLLFSFVAMLLIIPSKCEA). The propeptide occupies 33-52 (VSNDMQPLEARTADLVQQPR). Cys61 and Cys72 are oxidised to a cystine.

The protein belongs to the secapin family. Expressed by the venom gland.

Its subcellular location is the secreted. Its function is as follows. Nontoxic peptide. The protein is Secapin of Apis cerana cerana (Oriental honeybee).